The primary structure comprises 212 residues: Pyridoxine/pyridoxamine 5'-phosphate oxidase (212 aa).

FMN contacts are provided by residues 59 to 64 (RMVLMK), 74 to 75 (YS), K81, and Q103. K64 contributes to the substrate binding site. Substrate is bound by residues Y121 and R125. FMN contacts are provided by residues 138–139 (QS) and W183. Substrate is bound at residue 189–191 (RLH). R193 serves as a coordination point for FMN.

This sequence belongs to the pyridoxamine 5'-phosphate oxidase family. In terms of assembly, homodimer. It depends on FMN as a cofactor.

It catalyses the reaction pyridoxamine 5'-phosphate + O2 + H2O = pyridoxal 5'-phosphate + H2O2 + NH4(+). It carries out the reaction pyridoxine 5'-phosphate + O2 = pyridoxal 5'-phosphate + H2O2. Its pathway is cofactor metabolism; pyridoxal 5'-phosphate salvage; pyridoxal 5'-phosphate from pyridoxamine 5'-phosphate: step 1/1. It functions in the pathway cofactor metabolism; pyridoxal 5'-phosphate salvage; pyridoxal 5'-phosphate from pyridoxine 5'-phosphate: step 1/1. Its function is as follows. Catalyzes the oxidation of either pyridoxine 5'-phosphate (PNP) or pyridoxamine 5'-phosphate (PMP) into pyridoxal 5'-phosphate (PLP). The chain is Pyridoxine/pyridoxamine 5'-phosphate oxidase from Rhodopseudomonas palustris (strain HaA2).